The primary structure comprises 164 residues: UPF0262 protein Xaut_1232 (164 aa).

Belongs to the UPF0262 family.

This is UPF0262 protein Xaut_1232 from Xanthobacter autotrophicus (strain ATCC BAA-1158 / Py2).